A 132-amino-acid chain; its full sequence is MVEKNTYFIGVGRRKTAVATVKLMSGNGVIVIDGKPIEERFTRIQERNVILNPMMVTDTMGKFNAVIKVLGGGVTGQSGAIAHGIARALEKTDEKLRAALKSNGLLTRDDRTKERKKPGLKRARKAPQYTKR.

The disordered stretch occupies residues asparagine 103–arginine 132. A compositionally biased stretch (basic residues) spans glutamate 114 to arginine 132.

This sequence belongs to the universal ribosomal protein uS9 family.

The protein is Small ribosomal subunit protein uS9 of Dehalococcoides mccartyi (strain CBDB1).